Consider the following 2062-residue polypeptide: Unconventional myosin-X (2062 aa).

An N-acetylmethionine modification is found at M1. In terms of domain architecture, Myosin motor spans 63–739 (EGVDDMASLA…LEQKLEKRRE (677 aa)). ATP-binding positions include N104, Y113, 160–165 (GAGKTE), and N215. Residues 619–641 (LHSLMATLSSSNPFFVRCIKPNT) form an actin-binding region. 3 consecutive IQ domains span residues 742–771 (IDRA…GVVT), 765–794 (VLCG…AAIV), and 788–817 (LKKA…EKRE). Residues 814-882 (EKRELEEKKR…LTRELEKQRE (69 aa)) form an SAH region. The tract at residues 822–844 (KRREEEKKREEEERERERAQREA) is disordered. Residues 883 to 933 (NKQVEEILRLEKEIEDLQRMKERQELSLTEASLQKLQQLRDEELRRLEDEA) adopt a coiled-coil conformation. A phosphoserine mark is found at S961, S964, and S967. Disordered regions lie at residues 963–1047 (GSEI…VVPT) and 1062–1089 (QDSA…LPSP). A compositionally biased stretch (acidic residues) spans 993 to 1007 (AEEEVDEGFEADDDA). Over residues 1062 to 1085 (QDSASLHNSSSGESTYCMPQNNGD) the composition is skewed to polar residues. At T1162 the chain carries Phosphothreonine. 2 consecutive PH domains span residues 1216-1314 (EALK…QVHS) and 1396-1501 (EFIV…NVTD). Residues 1551 to 1699 (LPYGDINLNL…PSRDEIEALI (149 aa)) form the MyTH4 domain. The region spanning 1704-2048 (MTSTVYCHGG…AYISMIVKKR (345 aa)) is the FERM domain.

This sequence belongs to the TRAFAC class myosin-kinesin ATPase superfamily. Myosin family. In terms of assembly, monomer, when in an inactive conformation in the cytosol. Homodimer in its active, membrane-bound conformation; antiparallel coiled coil-mediated dimer formation. Interacts with ECPAS. Interacts with DCC and ITGB5; the presence of DCC inhibits ITGB5 binding. Interacts with tubulin; ITGB5 or DCC binding inhibits tubulin binding. Interacts strongly with CALM3 and weakly with CALM, the CALM3 interaction is essential for function in filopodial extension and motility. Interacts with ITGB1, ITGB3 and ITGB5. Interacts with NEO1. Interacts with VASP. Post-translationally, the initiator methionine for isoform Headless is removed. In terms of tissue distribution, detected in brain, heart, kidney, liver, stomach, skeletal muscle, lung, testis and skin. Isoform Headless is expressed in embryonic and neuronal stem cells, and enriched in proliferating and migrating cells.

The protein resides in the cytoplasm. Its subcellular location is the cytosol. It is found in the cell projection. The protein localises to the lamellipodium. It localises to the ruffle. The protein resides in the cytoskeleton. Its subcellular location is the filopodium tip. It is found in the cell cortex. The protein localises to the filopodium membrane. Its function is as follows. Myosins are actin-based motor molecules with ATPase activity. Unconventional myosins serve in intracellular movements. MYO10 binds to actin filaments and actin bundles and functions as a plus end-directed motor. Moves with higher velocity and takes larger steps on actin bundles than on single actin filaments. The tail domain binds to membranous compartments containing phosphatidylinositol 3,4,5-trisphosphate or integrins, and mediates cargo transport along actin filaments. Regulates cell shape, cell spreading and cell adhesion. Stimulates the formation and elongation of filopodia. In hippocampal neurons it induces the formation of dendritic filopodia by trafficking the actin-remodeling protein VASP to the tips of filopodia, where it promotes actin elongation. Plays a role in formation of the podosome belt in osteoclasts. In terms of biological role, functions as a dominant-negative regulator of isoform 1, suppressing its filopodia-inducing and axon outgrowth-promoting activities. In hippocampal neurons, it increases VASP retention in spine heads to induce spine formation and spine head expansion. The polypeptide is Unconventional myosin-X (Myo10) (Mus musculus (Mouse)).